The chain runs to 421 residues: Adenylosuccinate synthetase (421 aa).

GTP is bound by residues 11–17 and 39–41; these read GDEGKGK and GHT. Catalysis depends on Asp-12, which acts as the Proton acceptor. Residues Asp-12 and Gly-39 each contribute to the Mg(2+) site. Residues 12–15, 37–40, Thr-129, Arg-143, Asn-219, Thr-234, and Arg-298 contribute to the IMP site; these read DEGK and NAGH. His-40 serves as the catalytic Proton donor. 294–300 contacts substrate; that stretch reads VTTGRRR. Residues Arg-300, 326–328, and 409–411 each bind GTP; these read KLD and GTG.

This sequence belongs to the adenylosuccinate synthetase family. As to quaternary structure, homodimer. The cofactor is Mg(2+).

The protein localises to the cytoplasm. It catalyses the reaction IMP + L-aspartate + GTP = N(6)-(1,2-dicarboxyethyl)-AMP + GDP + phosphate + 2 H(+). It participates in purine metabolism; AMP biosynthesis via de novo pathway; AMP from IMP: step 1/2. Functionally, plays an important role in the de novo pathway and in the salvage pathway of purine nucleotide biosynthesis. Catalyzes the first committed step in the biosynthesis of AMP from IMP. This is Adenylosuccinate synthetase from Paracoccidioides brasiliensis (strain Pb03).